A 2291-amino-acid chain; its full sequence is Spectrin beta chain (2291 aa).

The tract at residues 1-271 is actin-binding; that stretch reads MTTDISIVRW…IITYVVTYYH (271 aa). Calponin-homology (CH) domains are found at residues 50–154 and 169–274; these read SVQK…LRFQ and KSAK…HYFS. Spectrin repeat units lie at residues 300–408, 420–521, 525–633, 636–739, 743–843, 848–948, 954–1057, 1060–1166, 1170–1272, 1276–1376, 1386–1484, 1488–1591, 1594–1697, 1701–1802, 1807–1909, 1913–2015, and 2020–2089; these read VHDY…ALRE, AARF…MRLE, QLQQ…RLEE, KLWQ…RLEN, YFQL…QRLL, LYKL…MDDL, VQTF…KLEE, DLHR…VLLS, DQQL…EKLK, KLHE…GAML, QQTC…KALE, EAFQ…HLLE, KVQQ…RLNE, LFML…TQML, ELHK…QKLA, DLFR…ENLQ, and VYQF…KEMK. Residues 2097 to 2140 are compositionally biased toward basic and acidic residues; sequence EAERQRIKEEQEAKAASEAAEQAKREAERRDDVDVGASHDDSER. Residues 2097–2152 form a disordered region; that stretch reads EAERQRIKEEQEAKAASEAAEQAKREAERRDDVDVGASHDDSERGGTPGAGEGHEG. The PH domain occupies 2147–2259; sequence GEGHEGYVTR…WVTSLKAQSD (113 aa). Residue serine 2195 is modified to Phosphoserine. Polar residues predominate over residues 2262-2275; sequence AVAASRSQTLPATS. The disordered stretch occupies residues 2262-2291; it reads AVAASRSQTLPATSQKDEPKRRSFFTLKKK.

The protein belongs to the spectrin family. As to quaternary structure, native spectrin molecule is a tetramer composed of two antiparallel heterodimers joined head to head so that each end of the native molecule includes the C-terminus of the alpha subunit and the N-terminus of the beta subunit.

It localises to the cytoplasm. The protein localises to the cytoskeleton. It is found in the cell cortex. Spectrin is the major constituent of the cytoskeletal network underlying the erythrocyte plasma membrane. It associates with band 4.1 and actin to form the cytoskeletal superstructure of the erythrocyte plasma membrane. Interacts with calmodulin in a calcium-dependent manner. The polypeptide is Spectrin beta chain (beta-Spec) (Drosophila melanogaster (Fruit fly)).